The sequence spans 871 residues: Phosphoinositide 3-kinase regulatory subunit 5 (871 aa).

Met-1 bears the N-acetylmethionine mark. The segment at 25–101 is heterodimerization; it reads SLGRRSAPWS…TPHFPPDSDL (77 aa). Residues 381–413 form a disordered region; the sequence is MDSGYVEDSEENSEWPQKPGSQKRQGHRRPGQK. 2 positions are modified to phosphoserine: Ser-451 and Ser-500. The tract at residues 646–746 is interaction with beta-gamma G protein dimers; sequence PILADMLLYY…WSNLEKVCTS (101 aa).

As to quaternary structure, heterodimer of a catalytic subunit (PIK3CG/p120) and a regulatory (PIK3R5a/p101) subunit. Interacts with beta-gamma G protein dimers.

Its subcellular location is the nucleus. The protein resides in the cytoplasm. It is found in the cell membrane. Greatly activated by G gamma proteins. Its function is as follows. Regulatory subunit of the PI3K gamma complex. Required for recruitment of the catalytic subunit to the plasma membrane via interaction with beta-gamma G protein dimers. Required for G protein-mediated activation of PIK3CG. This chain is Phosphoinositide 3-kinase regulatory subunit 5 (Pik3r5), found in Mus musculus (Mouse).